Here is a 300-residue protein sequence, read N- to C-terminus: Dihydroorotate dehydrogenase B (NAD(+)), catalytic subunit (300 aa).

FMN contacts are provided by residues S20 and 44–45 (KG). Residues K44 and 68-72 (NSVGL) each bind substrate. Positions 98 and 124 each coordinate FMN. A substrate-binding site is contributed by N124. The active-site Nucleophile is the C127. 2 residues coordinate FMN: K162 and I188. 189-190 (NT) lines the substrate pocket. FMN is bound by residues G214, 240-241 (GG), and 262-263 (GT).

Belongs to the dihydroorotate dehydrogenase family. Type 1 subfamily. In terms of assembly, heterotetramer of 2 PyrK and 2 PyrD type B subunits. The cofactor is FMN.

Its subcellular location is the cytoplasm. The catalysed reaction is (S)-dihydroorotate + NAD(+) = orotate + NADH + H(+). Its pathway is pyrimidine metabolism; UMP biosynthesis via de novo pathway; orotate from (S)-dihydroorotate (NAD(+) route): step 1/1. Its function is as follows. Catalyzes the conversion of dihydroorotate to orotate with NAD(+) as electron acceptor. This is Dihydroorotate dehydrogenase B (NAD(+)), catalytic subunit (pyrD) from Caldicellulosiruptor bescii (strain ATCC BAA-1888 / DSM 6725 / KCTC 15123 / Z-1320) (Anaerocellum thermophilum).